A 389-amino-acid polypeptide reads, in one-letter code: Succinate--CoA ligase [ADP-forming] subunit beta (389 aa).

Positions 9-244 (KAVLAKYGVP…LTEEDPAEVE (236 aa)) constitute an ATP-grasp domain. Residues Lys46, 53–55 (GRG), Glu99, Ser102, and Glu107 each bind ATP. Mg(2+) is bound by residues Asn199 and Asp213. Substrate is bound by residues Asn264 and 321–323 (GIM).

This sequence belongs to the succinate/malate CoA ligase beta subunit family. As to quaternary structure, heterotetramer of two alpha and two beta subunits. It depends on Mg(2+) as a cofactor.

It carries out the reaction succinate + ATP + CoA = succinyl-CoA + ADP + phosphate. The enzyme catalyses GTP + succinate + CoA = succinyl-CoA + GDP + phosphate. It participates in carbohydrate metabolism; tricarboxylic acid cycle; succinate from succinyl-CoA (ligase route): step 1/1. Succinyl-CoA synthetase functions in the citric acid cycle (TCA), coupling the hydrolysis of succinyl-CoA to the synthesis of either ATP or GTP and thus represents the only step of substrate-level phosphorylation in the TCA. The beta subunit provides nucleotide specificity of the enzyme and binds the substrate succinate, while the binding sites for coenzyme A and phosphate are found in the alpha subunit. The polypeptide is Succinate--CoA ligase [ADP-forming] subunit beta (Parvibaculum lavamentivorans (strain DS-1 / DSM 13023 / NCIMB 13966)).